We begin with the raw amino-acid sequence, 295 residues long: uncharacterized protein (295 aa).

This is an uncharacterized protein from Rickettsia prowazekii (strain Madrid E).